The following is a 276-amino-acid chain: NADPH-dependent 7-cyano-7-deazaguanine reductase (276 aa).

A substrate-binding site is contributed by Ile-83 to Ser-85. NADPH is bound at residue Ser-85–Lys-86. Catalysis depends on Cys-184, which acts as the Thioimide intermediate. Residue Asp-191 is the Proton donor of the active site. His-223–Glu-224 lines the substrate pocket. Arg-252–Gly-253 serves as a coordination point for NADPH.

Belongs to the GTP cyclohydrolase I family. QueF type 2 subfamily. As to quaternary structure, homodimer.

It localises to the cytoplasm. It carries out the reaction 7-aminomethyl-7-carbaguanine + 2 NADP(+) = 7-cyano-7-deazaguanine + 2 NADPH + 3 H(+). It participates in tRNA modification; tRNA-queuosine biosynthesis. Functionally, catalyzes the NADPH-dependent reduction of 7-cyano-7-deazaguanine (preQ0) to 7-aminomethyl-7-deazaguanine (preQ1). The polypeptide is NADPH-dependent 7-cyano-7-deazaguanine reductase (Ectopseudomonas mendocina (strain ymp) (Pseudomonas mendocina)).